Consider the following 176-residue polypeptide: Inner membrane-spanning protein YciB (176 aa).

The next 5 helical transmembrane spans lie at Thr24–His44, Pro49–His69, Trp76–Phe96, Leu119–Tyr139, and Phe149–Leu169.

Belongs to the YciB family.

Its subcellular location is the cell inner membrane. Its function is as follows. Plays a role in cell envelope biogenesis, maintenance of cell envelope integrity and membrane homeostasis. The chain is Inner membrane-spanning protein YciB from Paraburkholderia xenovorans (strain LB400).